The chain runs to 315 residues: Ribose-phosphate pyrophosphokinase (315 aa).

ATP-binding positions include Asp37–Glu39 and Arg96–Gln97. The Mg(2+) site is built by His131 and Asp170. Residue Lys194 is part of the active site. D-ribose 5-phosphate contacts are provided by residues Arg196, Asp220, and Asp224 to Thr228.

It belongs to the ribose-phosphate pyrophosphokinase family. Class I subfamily. As to quaternary structure, homohexamer. Requires Mg(2+) as cofactor.

Its subcellular location is the cytoplasm. The enzyme catalyses D-ribose 5-phosphate + ATP = 5-phospho-alpha-D-ribose 1-diphosphate + AMP + H(+). It functions in the pathway metabolic intermediate biosynthesis; 5-phospho-alpha-D-ribose 1-diphosphate biosynthesis; 5-phospho-alpha-D-ribose 1-diphosphate from D-ribose 5-phosphate (route I): step 1/1. Involved in the biosynthesis of the central metabolite phospho-alpha-D-ribosyl-1-pyrophosphate (PRPP) via the transfer of pyrophosphoryl group from ATP to 1-hydroxyl of ribose-5-phosphate (Rib-5-P). This chain is Ribose-phosphate pyrophosphokinase, found in Photorhabdus laumondii subsp. laumondii (strain DSM 15139 / CIP 105565 / TT01) (Photorhabdus luminescens subsp. laumondii).